A 75-amino-acid chain; its full sequence is MLIPYDQLQAETLTRLIEDFVTRDGTDNGDDTPLETRVLRVRQALAKGQAFILFDLESQQCQLLAKHDVPRELLE.

Belongs to the UPF0270 family.

This Pseudomonas putida (strain ATCC 47054 / DSM 6125 / CFBP 8728 / NCIMB 11950 / KT2440) protein is UPF0270 protein PP_1747.